The sequence spans 568 residues: Sulfite reductase [NADPH] hemoprotein beta-component (568 aa).

Cys425, Cys431, Cys470, and Cys474 together coordinate [4Fe-4S] cluster. Residue Cys474 coordinates siroheme.

It belongs to the nitrite and sulfite reductase 4Fe-4S domain family. Alpha(8)-beta(8). The alpha component is a flavoprotein, the beta component is a hemoprotein. The cofactor is siroheme. It depends on [4Fe-4S] cluster as a cofactor.

The enzyme catalyses hydrogen sulfide + 3 NADP(+) + 3 H2O = sulfite + 3 NADPH + 4 H(+). It functions in the pathway sulfur metabolism; hydrogen sulfide biosynthesis; hydrogen sulfide from sulfite (NADPH route): step 1/1. Component of the sulfite reductase complex that catalyzes the 6-electron reduction of sulfite to sulfide. This is one of several activities required for the biosynthesis of L-cysteine from sulfate. The sequence is that of Sulfite reductase [NADPH] hemoprotein beta-component from Xanthomonas campestris pv. campestris (strain B100).